The primary structure comprises 118 residues: V-type proton ATPase subunit G 1 (118 aa).

A2 carries the N-acetylalanine modification. Residues A19–A42 are disordered.

This sequence belongs to the V-ATPase G subunit family. As to quaternary structure, V-ATPase is a heteromultimeric enzyme made up of two complexes: the ATP-hydrolytic V1 complex and the proton translocation V0 complex. The V1 complex consists of three catalytic AB heterodimers that form a heterohexamer, three peripheral stalks each consisting of EG heterodimers, one central rotor including subunits D and F, and the regulatory subunits C and H. The proton translocation complex V0 consists of the proton transport subunit a, a ring of proteolipid subunits c9c'', rotary subunit d, subunits e and f, and the accessory subunits ATP6AP1/Ac45 and ATP6AP2/PRR. As to expression, brain, heart, kidney and spleen.

It localises to the apical cell membrane. Subunit of the V1 complex of vacuolar(H+)-ATPase (V-ATPase), a multisubunit enzyme composed of a peripheral complex (V1) that hydrolyzes ATP and a membrane integral complex (V0) that translocates protons. V-ATPase is responsible for acidifying and maintaining the pH of intracellular compartments and in some cell types, is targeted to the plasma membrane, where it is responsible for acidifying the extracellular environment. In aerobic conditions, involved in intracellular iron homeostasis, thus triggering the activity of Fe(2+) prolyl hydroxylase (PHD) enzymes, and leading to HIF1A hydroxylation and subsequent proteasomal degradation. The sequence is that of V-type proton ATPase subunit G 1 (ATP6V1G1) from Bos taurus (Bovine).